Reading from the N-terminus, the 261-residue chain is Proline-rich protein HaeIII subfamily 1 (261 aa).

The N-terminal stretch at 1–15 is a signal peptide; sequence MLVVLFTVALLALSS. The disordered stretch occupies residues 15–261; the sequence is SAQGPREENQ…PPQGRPQGPR (247 aa). 2 stretches are compositionally biased toward pro residues: residues 32-44 and 51-237; these read QRPP…PRPP and GPPP…PPTG. A compositionally biased stretch (low complexity) spans 238–261; sequence GPQQTPPLAGNTQGPPQGRPQGPR.

Its subcellular location is the secreted. The chain is Proline-rich protein HaeIII subfamily 1 (Prh1) from Mus musculus (Mouse).